The sequence spans 351 residues: Probable protein phosphatase 2C 8 (351 aa).

Residues 1–63 are disordered; that stretch reads MLEKESDLTA…REAEEDKPSF (63 aa). A compositionally biased stretch (basic and acidic residues) spans 54-63; that stretch reads REAEEDKPSF. One can recognise a PPM-type phosphatase domain in the interval 74–348; the sequence is EADVAEDKGA…DNCTAIVIVF (275 aa). Mn(2+)-binding residues include aspartate 114, glycine 115, aspartate 295, and aspartate 339.

The protein belongs to the PP2C family. It depends on Mg(2+) as a cofactor. Requires Mn(2+) as cofactor.

The catalysed reaction is O-phospho-L-seryl-[protein] + H2O = L-seryl-[protein] + phosphate. The enzyme catalyses O-phospho-L-threonyl-[protein] + H2O = L-threonyl-[protein] + phosphate. This chain is Probable protein phosphatase 2C 8, found in Arabidopsis thaliana (Mouse-ear cress).